Consider the following 403-residue polypeptide: MAVKIEQALGEKRSLNDNDEVPRKKRYNFRKKVELDYSALNEGEDKKSKFFHPHIALFEKEFEKCLSNVTEDMSMTCSEYCKRFDDIDFPLKISDPENSGMVVSTNNKTTRDLTVDDITQAVGDDYFVNVMDVQSQENERWSLREWCNYFNKPAEEKDRIRNVISLEVSHVEDLQYDRPDIVDDKDLVDIVWNNVENLDTENDPRPKVTKYCLMSVKNAFTDYHLDFAGTSVYYNLAFGKKKFILYPPTPENIENYIEWSTSTYQNMLFLGEKLTGGVAMELNGGDLFMIPSGYIHVVYTPEDSLIFGGNYLTFRDISQQLKIVDVEKQTGVTKRYTFPMFDEVMGRTCEWLCQNQKKGKQMQVKKETVNDLISYMKSGKTKYKPTNFINKKQMLQELSNLYL.

The JmjC domain occupies 141–328 (WSLREWCNYF…QQLKIVDVEK (188 aa)). A substrate-binding site is contributed by Thr-221. Positions 224 and 226 each coordinate Fe cation. Lys-241 is a substrate binding site. His-296 lines the Fe cation pocket.

Belongs to the JHDM1 histone demethylase family. The cofactor is Fe(2+).

It is found in the nucleus. The catalysed reaction is N(6),N(6)-dimethyl-L-lysyl(36)-[histone H3] + 2 2-oxoglutarate + 2 O2 = L-lysyl(36)-[histone H3] + 2 formaldehyde + 2 succinate + 2 CO2. In terms of biological role, histone demethylase that specifically demethylates 'Lys-36' of histone H3, thereby playing a central role in histone code. The protein is JmjC domain-containing histone demethylation protein 1 (JHD1) of Candida glabrata (strain ATCC 2001 / BCRC 20586 / JCM 3761 / NBRC 0622 / NRRL Y-65 / CBS 138) (Yeast).